A 152-amino-acid polypeptide reads, in one-letter code: Stigma-specific STIG1-like protein 1 (152 aa).

An N-terminal signal peptide occupies residues 1-19 (MAFVKLLVSIAITTAITIA).

Belongs to the STIG1 family.

In Arabidopsis thaliana (Mouse-ear cress), this protein is Stigma-specific STIG1-like protein 1.